The primary structure comprises 313 residues: HPr kinase/phosphorylase (313 aa).

Residues His-140 and Lys-161 contribute to the active site. 155–162 (GNSGAGKS) contacts ATP. A Mg(2+)-binding site is contributed by Ser-162. The active-site Proton acceptor; for phosphorylation activity. Proton donor; for dephosphorylation activity is Asp-179. An important for the catalytic mechanism of both phosphorylation and dephosphorylation region spans residues 203 to 212 (IEVRGLGILN). Glu-204 is a Mg(2+) binding site. Residue Arg-246 is part of the active site. The interval 267–272 (PVAAGR) is important for the catalytic mechanism of dephosphorylation.

Belongs to the HPrK/P family. Homohexamer. The cofactor is Mg(2+).

It carries out the reaction [HPr protein]-L-serine + ATP = [HPr protein]-O-phospho-L-serine + ADP + H(+). The enzyme catalyses [HPr protein]-O-phospho-L-serine + phosphate + H(+) = [HPr protein]-L-serine + diphosphate. In terms of biological role, catalyzes the ATP- as well as the pyrophosphate-dependent phosphorylation of a specific serine residue in HPr, a phosphocarrier protein of the phosphoenolpyruvate-dependent sugar phosphotransferase system (PTS). HprK/P also catalyzes the pyrophosphate-producing, inorganic phosphate-dependent dephosphorylation (phosphorolysis) of seryl-phosphorylated HPr (P-Ser-HPr). The protein is HPr kinase/phosphorylase of Aromatoleum aromaticum (strain DSM 19018 / LMG 30748 / EbN1) (Azoarcus sp. (strain EbN1)).